The chain runs to 150 residues: 3-dehydroquinate dehydratase (150 aa).

Tyrosine 26 serves as the catalytic Proton acceptor. Substrate is bound by residues asparagine 77, histidine 83, and aspartate 90. The active-site Proton donor is histidine 103. Substrate is bound by residues 104–105 (LS) and arginine 114.

Belongs to the type-II 3-dehydroquinase family. In terms of assembly, homododecamer.

The catalysed reaction is 3-dehydroquinate = 3-dehydroshikimate + H2O. It participates in metabolic intermediate biosynthesis; chorismate biosynthesis; chorismate from D-erythrose 4-phosphate and phosphoenolpyruvate: step 3/7. Functionally, catalyzes a trans-dehydration via an enolate intermediate. The sequence is that of 3-dehydroquinate dehydratase from Pseudoalteromonas translucida (strain TAC 125).